A 322-amino-acid polypeptide reads, in one-letter code: Solute carrier family 35 member B1 (322 aa).

8 helical membrane passes run 12–32 (LRLPLCFLGVFVCYFYYGILQ), 51–71 (FALTLVFIQCVINAMFAKILI), 85–105 (WLYAACSVSYVGAMVSSNSAL), 136–156 (YPLAKYLCVLLIVAGVALFMY), 168–188 (TVGFGELLLLMSLTLDGLTGV), 210–230 (LWSTFLLGAGILFTGELWEFL), 243–263 (ILLFGLTSALGQSFIFMTVVY), and 285–305 (VILFANPISSMQWVGTVLVFL). Positions 318–322 (KKTSH) match the Di-lysine motif motif.

It belongs to the nucleotide-sugar transporter family. SLC35B subfamily.

The protein localises to the endoplasmic reticulum membrane. It carries out the reaction ADP(in) + ATP(out) = ADP(out) + ATP(in). The catalysed reaction is UDP(out) + ATP(in) = UDP(in) + ATP(out). The enzyme catalyses UTP(out) + ATP(in) = UTP(in) + ATP(out). It catalyses the reaction dATP(out) + ATP(in) = dATP(in) + ATP(out). Functionally, ATP:ADP antiporter that catalyzes the exchange of ATP and ADP across the endoplasmic reticulum (ER) membrane. Imports ATP from the cytosol to the ER lumen and exports ADP in the opposite direction. Regulates ER energy metabolism and protein biogenesis. Appears to be part of a calcium-dependent ER to cytosol low energy response axis, where calcium efflux from ER to the cytosol triggers ATP import into the ER lumen to maintain sufficient ATP supply. Provides ATP to ER chaperone HSPA5 that drives protein folding and trafficking in the ER. Can transport dATP, UTP or UDP in exchange for ATP, but the physiological relevance of this process remains to be established. The chain is Solute carrier family 35 member B1 (Slc35b1) from Mus musculus (Mouse).